We begin with the raw amino-acid sequence, 337 residues long: 5-formaminoimidazole-4-carboxamide-1-(beta)-D-ribofuranosyl 5'-monophosphate synthetase (337 aa).

Residues His-9 and Ser-73 each contribute to the 5-amino-1-(5-phospho-beta-D-ribosyl)imidazole-4-carboxamide site. Residues 94–324 (KKIFEWEADQ…IGRRIAREIR (231 aa)) form the ATP-grasp domain. ATP-binding positions include 124–184 (PEDV…VPMY) and Glu-206. Residue Asn-234 participates in 5-amino-1-(5-phospho-beta-D-ribosyl)imidazole-4-carboxamide binding. Positions 273 and 286 each coordinate Mg(2+).

This sequence belongs to the phosphohexose mutase family. Requires Mg(2+) as cofactor. Mn(2+) is required as a cofactor.

The enzyme catalyses 5-amino-1-(5-phospho-beta-D-ribosyl)imidazole-4-carboxamide + formate + ATP = 5-formamido-1-(5-phospho-D-ribosyl)imidazole-4-carboxamide + ADP + phosphate. The protein operates within purine metabolism; IMP biosynthesis via de novo pathway; 5-formamido-1-(5-phospho-D-ribosyl)imidazole-4-carboxamide from 5-amino-1-(5-phospho-D-ribosyl)imidazole-4-carboxamide (formate route): step 1/1. Its function is as follows. Catalyzes the ATP- and formate-dependent formylation of 5-aminoimidazole-4-carboxamide-1-beta-d-ribofuranosyl 5'-monophosphate (AICAR) to 5-formaminoimidazole-4-carboxamide-1-beta-d-ribofuranosyl 5'-monophosphate (FAICAR) in the absence of folates. This chain is 5-formaminoimidazole-4-carboxamide-1-(beta)-D-ribofuranosyl 5'-monophosphate synthetase, found in Saccharolobus solfataricus (strain ATCC 35092 / DSM 1617 / JCM 11322 / P2) (Sulfolobus solfataricus).